The primary structure comprises 312 residues: Homoserine O-succinyltransferase (312 aa).

Cysteine 142 functions as the Acyl-thioester intermediate in the catalytic mechanism. Lysine 163 and serine 192 together coordinate substrate. Histidine 235 functions as the Proton acceptor in the catalytic mechanism. Glutamate 237 is a catalytic residue. Residue arginine 249 participates in substrate binding.

This sequence belongs to the MetA family.

Its subcellular location is the cytoplasm. The enzyme catalyses L-homoserine + succinyl-CoA = O-succinyl-L-homoserine + CoA. It participates in amino-acid biosynthesis; L-methionine biosynthesis via de novo pathway; O-succinyl-L-homoserine from L-homoserine: step 1/1. Its function is as follows. Transfers a succinyl group from succinyl-CoA to L-homoserine, forming succinyl-L-homoserine. The sequence is that of Homoserine O-succinyltransferase from Aliivibrio salmonicida (strain LFI1238) (Vibrio salmonicida (strain LFI1238)).